A 371-amino-acid chain; its full sequence is tRNA-specific 2-thiouridylase MnmA (371 aa).

ATP contacts are provided by residues 13-20 and methionine 39; that span reads GMSGGVDS. The tract at residues 99–101 is interaction with target base in tRNA; it reads NPD. Cysteine 104 functions as the Nucleophile in the catalytic mechanism. Residues cysteine 104 and cysteine 200 are joined by a disulfide bond. Residue glycine 128 participates in ATP binding. Positions 150 to 152 are interaction with tRNA; the sequence is KDQ. Cysteine 200 acts as the Cysteine persulfide intermediate in catalysis. The interval 308-309 is interaction with tRNA; the sequence is RY.

This sequence belongs to the MnmA/TRMU family.

The protein resides in the cytoplasm. The catalysed reaction is S-sulfanyl-L-cysteinyl-[protein] + uridine(34) in tRNA + AH2 + ATP = 2-thiouridine(34) in tRNA + L-cysteinyl-[protein] + A + AMP + diphosphate + H(+). In terms of biological role, catalyzes the 2-thiolation of uridine at the wobble position (U34) of tRNA, leading to the formation of s(2)U34. This chain is tRNA-specific 2-thiouridylase MnmA, found in Bacillus cereus (strain ATCC 14579 / DSM 31 / CCUG 7414 / JCM 2152 / NBRC 15305 / NCIMB 9373 / NCTC 2599 / NRRL B-3711).